The following is a 367-amino-acid chain: MQLYLSRLLLIVTRTALRVTGVFFWVLVYVAALLAAVSYIPDALRLLTRGPLSAFRWGPRKAAPACLTSSAHGQHGYIRMKDSGIRFHYVASGDKRNPLMLLLHGFPENWYSWRYQLDEFSNGYRTVAIDLRGFGGSDAPSRLEDYKMEILLQDLQDLIRGLGYSRCVLVGHDWGGTLAWTFAVRHRDMVTHLIVMNAPHPSAFHDYVLSHPSQLFSSRYVFLFQLPLIPEILLSLRDFEHIKKPLTDATHGIQNVECKLSKEEVEAFVYYPSQKGALTPPLNYYRNLFGFFPVKAQDVLVPTLLLWGEHDAFLEAAMVPEMQQYVRAPFRAEIIPNASHWLQQDRPQEVNKIIRDFLKEDFLVHRN.

Residues 21 to 41 (GVFFWVLVYVAALLAAVSYIP) traverse the membrane as a helical segment. Asp-173 acts as the Nucleophile in catalysis. Tyr-285 functions as the Proton donor in the catalytic mechanism. The Proton acceptor role is filled by His-340.

It belongs to the AB hydrolase superfamily. Epoxide hydrolase family.

It is found in the microsome membrane. The enzyme catalyses an epoxide + H2O = an ethanediol. It carries out the reaction 9,10-epoxyoctadecanoate + H2O = 9,10-dihydroxyoctadecanoate. The catalysed reaction is 9,10-epoxy-(12Z)-octadecenoate + H2O = 9,10-dihydroxy-(12Z)-octadecenoate. It catalyses the reaction 8,9-epoxy-(5Z,11Z,14Z)-eicosatrienoate + H2O = 8,9-dihydroxy-(5Z,11Z,14Z)-eicosatrienoate. The enzyme catalyses 11,12-epoxy-(5Z,8Z,14Z)-eicosatrienoate + H2O = 11,12-dihydroxy-(5Z,8Z,14Z)-eicosatrienoate. It carries out the reaction 14,15-epoxy-(5Z,8Z,11Z)-eicosatrienoate + H2O = 14,15-dihydroxy-(5Z,8Z,11Z)-eicosatrienoate. Its activity is regulated as follows. Inhibited by 1-(1-acetylpiperidin-4-yl)-3-(4-(trifl uoromethoxy)phenyl)urea (TPAU), 1-cyclohexyl-3-dodecylurea (CDU), 12-(3-adamantan-1-yl-ureido)-dodecanoic acid (AUDA), 1-((3S, 5S, 7S)-adamantan-1-yl)-3-(5-(2-(2-ethoxyethoxy) ethoxy)pentyl)urea (AEPU) and to a lesser extent by 8-(3-((3S, 5S, 7S)-adamantan-1-yl)ureido) octanoic acid (AUOA). Catalyzes the hydrolysis of epoxide-containing fatty acids. Active in vitro against epoxyeicosatrienoic acids (EETs) including 8,9-EET, 9,10-EET, 11,12-EET and 14,15-EET and leukotoxin. The sequence is that of Epoxide hydrolase 3 (ephx3) from Xenopus tropicalis (Western clawed frog).